A 130-amino-acid polypeptide reads, in one-letter code: Small ribosomal subunit protein uS9 (130 aa).

The protein belongs to the universal ribosomal protein uS9 family.

This Vibrio cholerae serotype O1 (strain ATCC 39541 / Classical Ogawa 395 / O395) protein is Small ribosomal subunit protein uS9.